The sequence spans 79 residues: PRKGKEKKEEQVISLGPQVAEGENVFGVCHIFASPNDTFVHVTDLSGXESICRVTGGMKMKADRXEXSPYXAMLAAQAV.

Ser-14 is subject to Phosphoserine. Residues Lys-59 and Lys-61 each participate in a glycyl lysine isopeptide (Lys-Gly) (interchain with G-Cter in SUMO2) cross-link.

Belongs to the universal ribosomal protein uS11 family. In terms of assembly, component of the small ribosomal subunit. Part of the small subunit (SSU) processome, composed of more than 70 proteins and the RNA chaperone small nucleolar RNA (snoRNA) U3.

The protein resides in the cytoplasm. It localises to the nucleus. The protein localises to the nucleolus. Component of the small ribosomal subunit. The ribosome is a large ribonucleoprotein complex responsible for the synthesis of proteins in the cell. Part of the small subunit (SSU) processome, first precursor of the small eukaryotic ribosomal subunit. During the assembly of the SSU processome in the nucleolus, many ribosome biogenesis factors, an RNA chaperone and ribosomal proteins associate with the nascent pre-rRNA and work in concert to generate RNA folding, modifications, rearrangements and cleavage as well as targeted degradation of pre-ribosomal RNA by the RNA exosome. This chain is Small ribosomal subunit protein uS11 (RPS14), found in Sus scrofa (Pig).